The chain runs to 317 residues: Electron transfer flavoprotein subunit alpha (317 aa).

Belongs to the ETF alpha-subunit/FixB family. Heterodimer of an alpha and a beta subunit. FAD serves as cofactor.

It is found in the cytoplasm. It participates in lipid metabolism; butanoate metabolism. Part of an electron transfer flavoprotein involved in syntrophic growth of S.wolfei with butyrate. Probably receives electrons from butyryl-CoA dehydrogenases, and transfers them to the membrane-bound quinone oxidoreductase Swol_0698. This Syntrophomonas wolfei subsp. wolfei (strain DSM 2245B / Goettingen) protein is Electron transfer flavoprotein subunit alpha.